Consider the following 152-residue polypeptide: Xanthine-guanine phosphoribosyltransferase (152 aa).

Residues 37-38 (RG), arginine 69, and 88-96 (DDLVDSGDT) contribute to the 5-phospho-alpha-D-ribose 1-diphosphate site. Arginine 69 contributes to the GMP binding site. Aspartate 89 is a binding site for Mg(2+). Residues aspartate 92 and isoleucine 135 each coordinate guanine. Positions 92 and 135 each coordinate xanthine. GMP contacts are provided by residues 92–96 (DSGDT) and 134–135 (WI).

This sequence belongs to the purine/pyrimidine phosphoribosyltransferase family. XGPT subfamily. In terms of assembly, homotetramer. The cofactor is Mg(2+).

It localises to the cell inner membrane. It catalyses the reaction GMP + diphosphate = guanine + 5-phospho-alpha-D-ribose 1-diphosphate. The catalysed reaction is XMP + diphosphate = xanthine + 5-phospho-alpha-D-ribose 1-diphosphate. The enzyme catalyses IMP + diphosphate = hypoxanthine + 5-phospho-alpha-D-ribose 1-diphosphate. It participates in purine metabolism; GMP biosynthesis via salvage pathway; GMP from guanine: step 1/1. It functions in the pathway purine metabolism; XMP biosynthesis via salvage pathway; XMP from xanthine: step 1/1. Its function is as follows. Purine salvage pathway enzyme that catalyzes the transfer of the ribosyl-5-phosphate group from 5-phospho-alpha-D-ribose 1-diphosphate (PRPP) to the N9 position of the 6-oxopurines guanine and xanthine to form the corresponding ribonucleotides GMP (guanosine 5'-monophosphate) and XMP (xanthosine 5'-monophosphate), with the release of PPi. To a lesser extent, also acts on hypoxanthine. The polypeptide is Xanthine-guanine phosphoribosyltransferase (Aliivibrio fischeri (strain ATCC 700601 / ES114) (Vibrio fischeri)).